Here is a 210-residue protein sequence, read N- to C-terminus: MNDKNTLKGTTTVGITCKDGVVFATERRASMGNLIAHKATDKIFKIDEHIAATIAGSVADAQSLMKYLKAEAALYRMRNSEKISIEAAAALAANILHSSRFYPFIVQTLLGGVDENGAKIYSLDPSGGMIPDKFVSTGSGSPVAYGVLEDRYSDELYVDEAVDVAIRAIKSAMERDTYSGNGILVATVTEEEGFRMLSEEEIQKRIENLN.

The propeptide at 1 to 9 is removed in mature form; by autocatalysis; that stretch reads MNDKNTLKG. Catalysis depends on Thr-10, which acts as the Nucleophile.

It belongs to the peptidase T1B family. In terms of assembly, the 20S proteasome core is composed of 14 alpha and 14 beta subunits that assemble into four stacked heptameric rings, resulting in a barrel-shaped structure. The two inner rings, each composed of seven catalytic beta subunits, are sandwiched by two outer rings, each composed of seven alpha subunits. The catalytic chamber with the active sites is on the inside of the barrel. Has a gated structure, the ends of the cylinder being occluded by the N-termini of the alpha-subunits. Is capped at one or both ends by the proteasome regulatory ATPase, PAN.

It localises to the cytoplasm. It catalyses the reaction Cleavage of peptide bonds with very broad specificity.. Its activity is regulated as follows. The formation of the proteasomal ATPase PAN-20S proteasome complex, via the docking of the C-termini of PAN into the intersubunit pockets in the alpha-rings, triggers opening of the gate for substrate entry. Interconversion between the open-gate and close-gate conformations leads to a dynamic regulation of the 20S proteasome proteolysis activity. Its function is as follows. Component of the proteasome core, a large protease complex with broad specificity involved in protein degradation. This Methanothermobacter thermautotrophicus (strain ATCC 29096 / DSM 1053 / JCM 10044 / NBRC 100330 / Delta H) (Methanobacterium thermoautotrophicum) protein is Proteasome subunit beta.